The chain runs to 311 residues: Small ribosomal subunit biogenesis GTPase RsgA (311 aa).

Residues 88-246 enclose the CP-type G domain; the sequence is SKEKEQVIVA…VIDTPGIREF (159 aa). GTP is bound by residues 137 to 140 and 188 to 196; these read NKID and GHSGVGKST. The Zn(2+) site is built by C270, C275, H277, and C283.

It belongs to the TRAFAC class YlqF/YawG GTPase family. RsgA subfamily. Monomer. Associates with 30S ribosomal subunit, binds 16S rRNA. Requires Zn(2+) as cofactor.

It localises to the cytoplasm. Functionally, one of several proteins that assist in the late maturation steps of the functional core of the 30S ribosomal subunit. Helps release RbfA from mature subunits. May play a role in the assembly of ribosomal proteins into the subunit. Circularly permuted GTPase that catalyzes slow GTP hydrolysis, GTPase activity is stimulated by the 30S ribosomal subunit. This chain is Small ribosomal subunit biogenesis GTPase RsgA, found in Chlorobaculum tepidum (strain ATCC 49652 / DSM 12025 / NBRC 103806 / TLS) (Chlorobium tepidum).